The primary structure comprises 380 residues: Enoyl-[acyl-carrier-protein] reductase, mitochondrial (380 aa).

Residues methionine 1–methionine 9 constitute a mitochondrion transit peptide. The Proton donor role is filled by tyrosine 73. NADP(+) contacts are provided by residues asparagine 157, threonine 185–valine 188, arginine 208–arginine 210, tyrosine 283–methionine 286, and tyrosine 308–valine 310. Phosphoserine is present on serine 339. Lysine 373 serves as a coordination point for NADP(+).

The protein belongs to the zinc-containing alcohol dehydrogenase family. Quinone oxidoreductase subfamily. Homodimer or in a complex with other proteins. Interacts with ARS1.

It localises to the mitochondrion matrix. The enzyme catalyses a 2,3-saturated acyl-[ACP] + NADP(+) = a (2E)-enoyl-[ACP] + NADPH + H(+). The catalysed reaction is (2E,4E)-hexadienoyl-CoA + NADPH + H(+) = (4E)-hexenoyl-CoA + NADP(+). It catalyses the reaction (2E)-hexenoyl-CoA + NADPH + H(+) = hexanoyl-CoA + NADP(+). In terms of biological role, catalyzes the NADPH-dependent reduction of trans-2-enoyl thioesters in mitochondrial fatty acid synthesis (fatty acid synthesis type II). Fatty acid chain elongation in mitochondria uses acyl carrier protein (ACP) as an acyl group carrier, but the enzyme accepts both ACP and CoA thioesters as substrates in vitro. Required for respiration and the maintenance of the mitochondrial compartment. This Saccharomyces cerevisiae (strain ATCC 204508 / S288c) (Baker's yeast) protein is Enoyl-[acyl-carrier-protein] reductase, mitochondrial (ETR1).